We begin with the raw amino-acid sequence, 1280 residues long: SET and MYND domain-containing protein DDB_G0284059 (1280 aa).

Disordered stretches follow at residues 1 to 35 (MTKKIKLSNSESNKVNNNNNNNHGNGHNHNHSHNH) and 111 to 167 (INKI…QKQQ). 2 stretches are compositionally biased toward low complexity: residues 16–25 (NNNNNNNHGN) and 117–153 (ENSPPSSPTLSSSTNTTTDRQELPQQQQQPQQQQSQP). TPR repeat units lie at residues 272 to 305 (SKGYKNKGNELFQKKQYSDALLLYNESLRIYDME) and 383 to 416 (HKLYYRRGICYYHLRKHYKAKKDFLRAHTLIEKR). A coiled-coil region spans residues 439 to 468 (QKDEEIEQELDNKNNNSNDDEKQQQQQQQQ). Positions 533, 536, 546, 549, 555, 559, 568, and 572 each coordinate Zn(2+). The MYND-type zinc finger occupies 533–572 (CYNCFKEILSPIYCKECSNSQYCSNKCLNEDYVKQHGREC). 4 disordered regions span residues 601–642 (ANKG…QNLN), 659–726 (ALSS…TTTT), 854–905 (QQQQ…PFSP), and 1039–1079 (AKLQ…LNNN). Composition is skewed to low complexity over residues 659 to 697 (ALSSASTPTTATATTTTTTTTATTPTTLAETLSSTSLTE), 712 to 726 (SSSSSSSSSSSTTTT), 854 to 898 (QQQQ…QNPP), 1042 to 1053 (QQQQQQQQQHQQ), and 1061 to 1079 (NSNPTNLGSNNNNNYLNNN). An SET domain is found at 822–965 (CQLTTYTFAI…KGEEILGCYG (144 aa)). One copy of the TPR 3 repeat lies at 1218-1251 (GREYSKLGQIYLTLGEIEKSEDAIEKAESILMSW).

Belongs to the class V-like SAM-binding methyltransferase superfamily.

In terms of biological role, probable methyltransferase. The sequence is that of SET and MYND domain-containing protein DDB_G0284059 from Dictyostelium discoideum (Social amoeba).